Consider the following 115-residue polypeptide: Tyrosine-protein phosphatase 21 (115 aa).

Residues 1–115 (WLMIVEKECR…EIGGDAPMVV (115 aa)) form the Tyrosine-protein phosphatase domain. Aspartate 83 contributes to the substrate binding site.

The protein belongs to the protein-tyrosine phosphatase family.

It carries out the reaction O-phospho-L-tyrosyl-[protein] + H2O = L-tyrosyl-[protein] + phosphate. This chain is Tyrosine-protein phosphatase 21 (STY-21), found in Styela plicata (Wrinkled sea squirt).